A 314-amino-acid chain; its full sequence is Methionyl-tRNA formyltransferase (314 aa).

112 to 115 (SLLP) is a binding site for (6S)-5,6,7,8-tetrahydrofolate.

The protein belongs to the Fmt family.

It catalyses the reaction L-methionyl-tRNA(fMet) + (6R)-10-formyltetrahydrofolate = N-formyl-L-methionyl-tRNA(fMet) + (6S)-5,6,7,8-tetrahydrofolate + H(+). Functionally, attaches a formyl group to the free amino group of methionyl-tRNA(fMet). The formyl group appears to play a dual role in the initiator identity of N-formylmethionyl-tRNA by promoting its recognition by IF2 and preventing the misappropriation of this tRNA by the elongation apparatus. The sequence is that of Methionyl-tRNA formyltransferase from Aeromonas hydrophila subsp. hydrophila (strain ATCC 7966 / DSM 30187 / BCRC 13018 / CCUG 14551 / JCM 1027 / KCTC 2358 / NCIMB 9240 / NCTC 8049).